A 137-amino-acid polypeptide reads, in one-letter code: Probable leaf thionin (137 aa).

The N-terminal stretch at 1 to 28 is a signal peptide; sequence MATNKSIKSVVICVLILGLVLEQVQVEG. 4 cysteine pairs are disulfide-bonded: Cys-31–Cys-68, Cys-32–Cys-60, Cys-40–Cys-58, and Cys-44–Cys-54. Positions 75 to 137 are cleaved as a propeptide — acidic domain; the sequence is LNLLPESGEP…DGDVIQSVEA (63 aa).

This sequence belongs to the plant thionin (TC 1.C.44) family. 4 C-C subfamily.

It localises to the secreted. Functionally, thionins are small plant proteins which are toxic to animal cells. They seem to exert their toxic effect at the level of the cell membrane. Their precise function is not known. The protein is Probable leaf thionin of Hordeum vulgare (Barley).